Consider the following 376-residue polypeptide: Peroxisomal membrane protein PEX14 (376 aa).

Over residues 1 to 12 (MASSEQAEQPNQ) the composition is skewed to polar residues. Residues 1–24 (MASSEQAEQPNQPSSPPGSENVVP) form a disordered region. A2 carries the N-acetylalanine modification. Over 2–108 (ASSEQAEQPN…YSPRGSRWRD (107 aa)) the chain is Peroxisomal. At K34 the chain carries N6-acetyllysine. Residues 70 to 102 (SGTAADEPSPLGPATPVVPVQPPHLTPQPYSPR) form a disordered region. A compositionally biased stretch (pro residues) spans 88 to 99 (PVQPPHLTPQPY). The chain crosses the membrane as a helical span at residues 109-127 (YGALAIIMAGIAFGFHQLY). Over 128–376 (KRYLLPLILG…EGASNETERD (249 aa)) the chain is Cytoplasmic. Residues 230-376 (PPSPSAPKIP…EGASNETERD (147 aa)) form a disordered region. Residue S232 is modified to Phosphoserine. 2 stretches are compositionally biased toward low complexity: residues 247 to 259 (SSSPSSPAAVNHH) and 265 to 275 (SPVSNESTSSS). 2 positions are modified to phosphoserine: S282 and S334. Positions 323–341 (KEDEDDEDDDVSHVDEEDV) are enriched in acidic residues. Residues 359-376 (QVEKLRRPEGASNETERD) show a composition bias toward basic and acidic residues.

It belongs to the peroxin-14 family. As to quaternary structure, interacts with PEX13; forming the PEX13-PEX14 docking complex. Interacts with PEX5 (via WxxxF/Y motifs). Interacts with PEX19. Interacts with tubulin.

It is found in the peroxisome membrane. In terms of biological role, component of the PEX13-PEX14 docking complex, a translocon channel that specifically mediates the import of peroxisomal cargo proteins bound to PEX5 receptor. The PEX13-PEX14 docking complex forms a large import pore which can be opened to a diameter of about 9 nm. Mechanistically, PEX5 receptor along with cargo proteins associates with the PEX14 subunit of the PEX13-PEX14 docking complex in the cytosol, leading to the insertion of the receptor into the organelle membrane with the concomitant translocation of the cargo into the peroxisome matrix. Plays a key role for peroxisome movement through a direct interaction with tubulin. The sequence is that of Peroxisomal membrane protein PEX14 from Mus musculus (Mouse).